The following is a 391-amino-acid chain: UPF0229 protein BAA_0633 (391 aa).

Polar residues predominate over residues 1–16 (MGEENQPNYTISQENW). 2 disordered regions span residues 1 to 31 (MGEE…RHQE) and 80 to 117 (HVGQ…GDAA). The span at 21-31 (KGYDDQQRHQE) shows a compositional bias: basic and acidic residues. Gly residues predominate over residues 98 to 115 (GSGGQKQKGPGKGQGAGD).

Belongs to the UPF0229 family.

In Bacillus anthracis (strain A0248), this protein is UPF0229 protein BAA_0633.